Reading from the N-terminus, the 313-residue chain is Protein FixB (313 aa).

255–283 (LYLAVGISGQIQHMVGANASQTIFAINKD) contributes to the FAD binding site.

This sequence belongs to the ETF alpha-subunit/FixB family. Heterodimer of FixA and FixB.

It functions in the pathway amine and polyamine metabolism; carnitine metabolism. Its function is as follows. Required for anaerobic carnitine reduction. May bring reductant to CaiA. The polypeptide is Protein FixB (Escherichia coli O1:K1 / APEC).